The primary structure comprises 376 residues: MSCPYFEQKSCTSCTHMNTPYSQQLETKDNALRSLFSDVEQSAWLAPVQSDSMHCRNKAKMVALGAAHQPTLGIESVQDGTPISLVHCPLYTQESQELLAYLQEWIRTSGIPPYNKVKKKGELKFVLLTRSQARGEFMLRFVVRSEAALERIRHNLPRLQQAFPAVRVISANIQPIHMARLEGEQEIFLTDAHYLLEEFNGVPMVVRPKSFFQTNPHVAAQLYATARNWVAELKPRQMWDLFCGVGGFALHCAPHAEQVIGIEIEEEAINSAKLSAQQLGIDNLRFSALDSAAYSQAQTQAADLILVNPPRRGLGQALSEQLEQLASQYLIYSSCNPVTMQQDLAHLPSYRVERAQWFDMFPHTDHAEVMMLLVRQ.

[4Fe-4S] cluster is bound by residues cysteine 3, cysteine 11, cysteine 14, and cysteine 88. Glutamine 213, phenylalanine 242, glutamate 263, and asparagine 308 together coordinate S-adenosyl-L-methionine. Cysteine 335 functions as the Nucleophile in the catalytic mechanism.

This sequence belongs to the class I-like SAM-binding methyltransferase superfamily. RNA M5U methyltransferase family. RlmC subfamily.

The enzyme catalyses uridine(747) in 23S rRNA + S-adenosyl-L-methionine = 5-methyluridine(747) in 23S rRNA + S-adenosyl-L-homocysteine + H(+). Catalyzes the formation of 5-methyl-uridine at position 747 (m5U747) in 23S rRNA. This Vibrio vulnificus (strain CMCP6) protein is 23S rRNA (uracil(747)-C(5))-methyltransferase RlmC.